Here is a 347-residue protein sequence, read N- to C-terminus: Biotin synthase (347 aa).

Residues 40 to 258 (AQVQVSTLLS…IAVARIVMPR (219 aa)) form the Radical SAM core domain. Positions 55, 59, and 62 each coordinate [4Fe-4S] cluster. [2Fe-2S] cluster contacts are provided by Cys-99, Cys-130, Cys-190, and Arg-262.

Belongs to the radical SAM superfamily. Biotin synthase family. Homodimer. Requires [4Fe-4S] cluster as cofactor. It depends on [2Fe-2S] cluster as a cofactor.

The catalysed reaction is (4R,5S)-dethiobiotin + (sulfur carrier)-SH + 2 reduced [2Fe-2S]-[ferredoxin] + 2 S-adenosyl-L-methionine = (sulfur carrier)-H + biotin + 2 5'-deoxyadenosine + 2 L-methionine + 2 oxidized [2Fe-2S]-[ferredoxin]. The protein operates within cofactor biosynthesis; biotin biosynthesis; biotin from 7,8-diaminononanoate: step 2/2. In terms of biological role, catalyzes the conversion of dethiobiotin (DTB) to biotin by the insertion of a sulfur atom into dethiobiotin via a radical-based mechanism. The polypeptide is Biotin synthase (Stenotrophomonas maltophilia (strain R551-3)).